The sequence spans 492 residues: UPF0236 protein TTE1650/TTE2708 (492 aa).

The protein belongs to the UPF0236 family.

This is UPF0236 protein TTE1650/TTE2708 from Caldanaerobacter subterraneus subsp. tengcongensis (strain DSM 15242 / JCM 11007 / NBRC 100824 / MB4) (Thermoanaerobacter tengcongensis).